The primary structure comprises 376 residues: Queuine tRNA-ribosyltransferase (376 aa).

Catalysis depends on D90, which acts as the Proton acceptor. Substrate is bound by residues 90–94 (DSGGF), D144, Q193, and G220. Positions 251 to 257 (GVGTPED) are RNA binding. D270 acts as the Nucleophile in catalysis. The segment at 275 to 279 (TRNAR) is RNA binding; important for wobble base 34 recognition. Positions 308, 310, 313, and 339 each coordinate Zn(2+).

Belongs to the queuine tRNA-ribosyltransferase family. Homodimer. Within each dimer, one monomer is responsible for RNA recognition and catalysis, while the other monomer binds to the replacement base PreQ1. It depends on Zn(2+) as a cofactor.

It carries out the reaction 7-aminomethyl-7-carbaguanine + guanosine(34) in tRNA = 7-aminomethyl-7-carbaguanosine(34) in tRNA + guanine. The protein operates within tRNA modification; tRNA-queuosine biosynthesis. Catalyzes the base-exchange of a guanine (G) residue with the queuine precursor 7-aminomethyl-7-deazaguanine (PreQ1) at position 34 (anticodon wobble position) in tRNAs with GU(N) anticodons (tRNA-Asp, -Asn, -His and -Tyr). Catalysis occurs through a double-displacement mechanism. The nucleophile active site attacks the C1' of nucleotide 34 to detach the guanine base from the RNA, forming a covalent enzyme-RNA intermediate. The proton acceptor active site deprotonates the incoming PreQ1, allowing a nucleophilic attack on the C1' of the ribose to form the product. After dissociation, two additional enzymatic reactions on the tRNA convert PreQ1 to queuine (Q), resulting in the hypermodified nucleoside queuosine (7-(((4,5-cis-dihydroxy-2-cyclopenten-1-yl)amino)methyl)-7-deazaguanosine). This is Queuine tRNA-ribosyltransferase from Cupriavidus metallidurans (strain ATCC 43123 / DSM 2839 / NBRC 102507 / CH34) (Ralstonia metallidurans).